We begin with the raw amino-acid sequence, 128 residues long: uncharacterized protein (128 aa).

Helical transmembrane passes span 13-35, 42-64, and 90-112; these read FQMA…VFFV, IIAL…YNGG, and LVLT…SIIL.

Its subcellular location is the cell membrane. This is an uncharacterized protein from Methanocaldococcus jannaschii (strain ATCC 43067 / DSM 2661 / JAL-1 / JCM 10045 / NBRC 100440) (Methanococcus jannaschii).